We begin with the raw amino-acid sequence, 393 residues long: Phosphoglycerate kinase (393 aa).

Substrate-binding positions include Asp22–Asn24, Arg37, His60–Arg63, Arg119, and Arg152. Residues Lys202, Gly293, Glu324, and Gly350–Ser353 each bind ATP.

This sequence belongs to the phosphoglycerate kinase family. As to quaternary structure, monomer.

It localises to the cytoplasm. The enzyme catalyses (2R)-3-phosphoglycerate + ATP = (2R)-3-phospho-glyceroyl phosphate + ADP. It functions in the pathway carbohydrate degradation; glycolysis; pyruvate from D-glyceraldehyde 3-phosphate: step 2/5. This is Phosphoglycerate kinase from Borrelia garinii subsp. bavariensis (strain ATCC BAA-2496 / DSM 23469 / PBi) (Borreliella bavariensis).